The following is a 277-amino-acid chain: Carbonyl reductase [NADPH] 1 (277 aa).

N-acetylserine is present on Ser2. Phosphoserine occurs at positions 2 and 30. NADP(+) contacts are provided by residues 10–34 (VTGA…GDVV), 63–64 (DI), and Asn90. Residues 95 to 97 (FKV) and Gln106 each bind glutathione. A substrate-binding site is contributed by Ser140. Residue 193-194 (AY) participates in glutathione binding. Tyr194 serves as the catalytic Proton acceptor. NADP(+) contacts are provided by residues 194–198 (YGVTK) and 231–233 (VRT). The residue at position 239 (Lys239) is an N6-1-carboxyethyl lysine. Positions 258 to 277 (PPDAEGPHGQFVQDKKVEPW) are disordered.

It belongs to the short-chain dehydrogenases/reductases (SDR) family. Monomer.

It localises to the cytoplasm. The catalysed reaction is a secondary alcohol + NADP(+) = a ketone + NADPH + H(+). It carries out the reaction prostaglandin F2alpha + NADP(+) = prostaglandin E2 + NADPH + H(+). The enzyme catalyses prostaglandin E1 + NADP(+) = 15-oxoprostaglandin E1 + NADPH + H(+). It catalyses the reaction menadione + NADPH + H(+) = menadiol + NADP(+). The catalysed reaction is prostaglandin D2 + NADP(+) = 15-oxoprostaglandin D2 + NADPH + H(+). It carries out the reaction prostaglandin E2 + NADP(+) = 15-oxoprostaglandin E2 + NADPH + H(+). The enzyme catalyses prostaglandin F2alpha + NADP(+) = 15-oxoprostaglandin F2alpha + NADPH + H(+). It catalyses the reaction daunorubicin + NADPH + H(+) = 13-dihydrodaunorubicin + NADP(+). The catalysed reaction is S-nitrosoglutathione + NADPH + H(+) = S-(hydroxysulfenamide)glutathione + NADP(+). It carries out the reaction corticosterone + NADPH + H(+) = 20beta-dihydrocorticosterone + NADP(+). The enzyme catalyses a primary alcohol + NADP(+) = an aldehyde + NADPH + H(+). It catalyses the reaction cortisol + NADPH + H(+) = 20beta-dihydrocortisol + NADP(+). NADPH-dependent reductase with broad substrate specificity. Catalyzes the reduction of a wide variety of carbonyl compounds including quinones, prostaglandins, menadione, plus various xenobiotics. Catalyzes the reduction of the antitumor anthracyclines doxorubicin and daunorubicin to the cardiotoxic compounds doxorubicinol and daunorubicinol. Can convert prostaglandin E to prostaglandin F2-alpha. Can bind glutathione, which explains its higher affinity for glutathione-conjugated substrates. Catalyzes the reduction of S-nitrosoglutathione. In addition, participates in the glucocorticoid metabolism by catalyzing the NADPH-dependent cortisol/corticosterone into 20beta-dihydrocortisol (20b-DHF) or 20beta-corticosterone (20b-DHB), which are weak agonists of NR3C1 and NR3C2 in adipose tissue. The protein is Carbonyl reductase [NADPH] 1 of Mus musculus (Mouse).